We begin with the raw amino-acid sequence, 105 residues long: Membrane-stabilizing protein A (105 aa).

A helical transmembrane segment spans residues 1-21; sequence MQFYLILLAILYLIVSFISIF. Topologically, residues 22 to 29 are cytoplasmic; sequence KMEVVFTR. The helical transmembrane segment at 30-50 threads the bilayer; that stretch reads ILRIIMGVLLLFVLALTTMSF. At 51 to 55 the chain is on the extracellular side; that stretch reads PKENW. The helical transmembrane segment at 56–76 threads the bilayer; that stretch reads WVFIVLLLLVGNVEVTGFKML. Topologically, residues 77-84 are cytoplasmic; sequence KKDLKGVN. The helical transmembrane segment at 85 to 105 threads the bilayer; it reads ILNLMSLFIFVIYFILTIVLF.

Belongs to the MspA family.

It is found in the membrane. Plays a role in toxin production, resistance to host innate immune mechanisms, and iron homeostasis. This is Membrane-stabilizing protein A from Staphylococcus aureus (strain NCTC 8325 / PS 47).